A 121-amino-acid chain; its full sequence is Large ribosomal subunit protein uL22 (121 aa).

The protein belongs to the universal ribosomal protein uL22 family. In terms of assembly, part of the 50S ribosomal subunit.

Its function is as follows. This protein binds specifically to 23S rRNA; its binding is stimulated by other ribosomal proteins, e.g. L4, L17, and L20. It is important during the early stages of 50S assembly. It makes multiple contacts with different domains of the 23S rRNA in the assembled 50S subunit and ribosome. In terms of biological role, the globular domain of the protein is located near the polypeptide exit tunnel on the outside of the subunit, while an extended beta-hairpin is found that lines the wall of the exit tunnel in the center of the 70S ribosome. This Hydrogenobaculum sp. (strain Y04AAS1) protein is Large ribosomal subunit protein uL22.